The primary structure comprises 220 residues: Charged multivesicular body protein 2a (220 aa).

Residues 12-53 (EEMLRQNQRALNRAMRDLDRERQRLEQQEKKIIADIKKMAKQ) are a coiled coil. The disordered stretch occupies residues 184 to 220 (ATGGSLSVAAGKKAEPQPTLADADADLEERLNNLRRD). The MIT-interacting motif motif lies at 208–218 (ADLEERLNNLR). Residues 211–220 (EERLNNLRRD) are compositionally biased toward basic and acidic residues.

Belongs to the SNF7 family. As to quaternary structure, probable core component of the endosomal sorting required for transport complex III (ESCRT-III). ESCRT-III components are thought to multimerize to form a flat lattice on the perimeter membrane of the endosome.

Its subcellular location is the late endosome membrane. It is found in the cytoplasm. In terms of biological role, probable core component of the endosomal sorting required for transport complex III (ESCRT-III) which is involved in multivesicular bodies (MVBs) formation and sorting of endosomal cargo proteins into MVBs. MVBs contain intraluminal vesicles (ILVs) that are generated by invagination and scission from the limiting membrane of the endosome and mostly are delivered to lysosomes enabling degradation of membrane proteins, such as stimulated growth factor receptors, lysosomal enzymes and lipids. This is Charged multivesicular body protein 2a (chmp2a) from Danio rerio (Zebrafish).